We begin with the raw amino-acid sequence, 192 residues long: Density-regulated protein homolog (192 aa).

Residues Gly62 to Pro116 are disordered. Low complexity predominate over residues Lys87–Gly99. An SUI1 domain is found at Arg117–Trp176.

It belongs to the DENR family.

The sequence is that of Density-regulated protein homolog from Caenorhabditis elegans.